Here is a 319-residue protein sequence, read N- to C-terminus: MSANYWHSTQCRFWSFTKEQLVTMRQKLEEDNAELVRMFPLPQQRRLYIYFNQQLIRLAKRLTIRQQSMATAQVYMKRFYSKVEIRRTNPYLVIATAIYLACKIEESPQHIRLIVTEARQMWGDLVAIDTSKLGECEFFMISEMRSQLIVFQPYRTITALRNELSLVDDEVQLARSVINDHFMTDLPLLYPPHIIAMVAILLALVLRPNNSGPGQSTSGAAAAAGLAAAQQALMRAQGQQAQGGMPEPAAAEPKEKRQQDRVSRVQKFAKWLVDSNVEIASMVDATQEIISFYECYEHYNDKLTREQINRFVKARGLDK.

The region spanning 53–142 (QQLIRLAKRL…LGECEFFMIS (90 aa)) is the Cyclin N-terminal domain. Low complexity predominate over residues 237–251 (QGQQAQGGMPEPAAA). The disordered stretch occupies residues 237-261 (QGQQAQGGMPEPAAAEPKEKRQQDR). The segment covering 252–261 (EPKEKRQQDR) has biased composition (basic and acidic residues).

This sequence belongs to the cyclin family. Cyclin C subfamily. In terms of assembly, component of the SRB8-11 complex, a regulatory module of the Mediator complex. Interacts with SSN3/FCK1.

The protein localises to the nucleus. Functionally, component of the SRB8-11 complex. The SRB8-11 complex is a regulatory module of the Mediator complex which is itself involved in regulation of basal and activated RNA polymerase II-dependent transcription. The SRB8-11 complex may be involved in the transcriptional repression of a subset of genes regulated by Mediator. It may inhibit the association of the Mediator complex with RNA polymerase II to form the holoenzyme complex. The SRB8-11 complex phosphorylates the C-terminal domain (CTD) of the largest subunit of RNA polymerase II. May play a role in signal transduction pathways regulating secondary metabolism and fungal development (conidiation). The sequence is that of RNA polymerase II holoenzyme cyclin-like subunit (SSN8) from Gibberella moniliformis (Maize ear and stalk rot fungus).